A 30-amino-acid polypeptide reads, in one-letter code: Phospholipase A2 acanmyotoxin-2 (30 aa).

Positions 28 and 30 each coordinate Ca(2+).

It depends on Ca(2+) as a cofactor. In terms of processing, contains seven disulfide bonds. Expressed by the venom gland.

The protein resides in the secreted. The enzyme catalyses a 1,2-diacyl-sn-glycero-3-phosphocholine + H2O = a 1-acyl-sn-glycero-3-phosphocholine + a fatty acid + H(+). Snake venom phospholipase A2 (PLA2) that has myotoxic activity but no significant neurotoxicity. PLA2 catalyzes the calcium-dependent hydrolysis of the 2-acyl groups in 3-sn-phosphoglycerides. The protein is Phospholipase A2 acanmyotoxin-2 of Acanthophis sp. (strain Seram) (Seram death adder).